Reading from the N-terminus, the 121-residue chain is Huntingtin-interacting protein K (121 aa).

Over residues 1-13 (MATEGDVELELET) the composition is skewed to acidic residues. Positions 1–75 (MATEGDVELE…EQKAKQEREK (75 aa)) are disordered. 2 stretches are compositionally biased toward basic and acidic residues: residues 20–47 (RPPEKPRKHDSGAADLERVTDYAEEKEI) and 60–75 (GDRRSREQKAKQEREK). Serine 30 carries the phosphoserine modification. Positions 52–121 (LETAMSVIGD…VVEALIALTN (70 aa)) are required for association with the NAA10-NAA15 complex. The stretch at 62 to 107 (RRSREQKAKQEREKELAKVTIKKEDLELIMTEMEISRAAAERSLRE) forms a coiled coil.

As to quaternary structure, component of the N-terminal acetyltransferase A (NatA)/HYPK complex at least composed of NAA10, NAA15 and HYPK, which has N-terminal acetyltransferase activity. Within the complex interacts with NAA10. Within the complex interacts with NAA15. Predominantly interacts with NAA15 in the NAA10-NAA15 complex (also called the NatA complex); the interaction with the NatA complex reduces the acetylation activity of the NatA complex. Interacts with HTT (via N-terminus). The NatA complex is required for HYPK stability and for reducing polyQ aggregation of HTT. Component of the N-terminal acetyltransferase E (NatE)/HYPK complex at least composed of NAA10, NAA15, NAA50 and HYPK. Within the complex interacts with NAA10 and NAA15. Does not interact with NAA50. Interaction with NAA15 reduces the capacity of NAA15 to interact with NAA50. Its capacity to interact with the NatA complex is reduced by NAA50. Does not interact with the N-terminal acetyltransferase B (NatB) complex component NAA25 or the N-terminal acetyltransferase C (NatC) complex component NAA35.

It is found in the nucleus. Its subcellular location is the cytoplasm. Functionally, component of several N-terminal acetyltransferase complexes. Inhibits the N-terminal acetylation activity of the N-terminal acetyltransferase NAA10-NAA15 complex (also called the NatA complex). Has chaperone-like activity preventing polyglutamine (polyQ) aggregation of HTT in neuronal cells probably while associated with the NatA complex. May play a role in the NatA complex-mediated N-terminal acetylation of PCNP. This chain is Huntingtin-interacting protein K, found in Homo sapiens (Human).